A 534-amino-acid polypeptide reads, in one-letter code: Glucomannan 4-beta-mannosyltransferase 2 (534 aa).

The helical transmembrane segment at 36 to 56 (VIVPLLQLAVYICLLMSVMLL) threads the bilayer. The active site involves Asp136. Residues Asp195 and Asp197 each coordinate substrate. The active site involves Asp289. 4 consecutive transmembrane segments (helical) span residues 368–388 (IIAHWVTFCFYCVVLPLTILV), 404–426 (IITILNSVGTPRSIHLLFYWILF), 483–503 (LNTLELGFAAFLFVCGCYDFV), and 509–529 (YFIYLFLQTMSFFISGLGWIG).

It belongs to the glycosyltransferase 2 family. Plant cellulose synthase-like A subfamily.

Its subcellular location is the golgi apparatus membrane. It catalyses the reaction GDP-mannose + (glucomannan)n = GDP + (glucomannan)n+1.. In terms of biological role, possesses glucomannan synthase and mannan synthase activities in vitro. Mannan synthase consists of a 4-beta-mannosyltransferase activity on mannan using GDP-mannose. The beta-1,4-mannan product is the backbone for galactomannan synthesis by galactomannan galactosyltransferase. Galactomannan is a noncellulosic polysaccharides of plant cell wall. The polypeptide is Glucomannan 4-beta-mannosyltransferase 2 (Arabidopsis thaliana (Mouse-ear cress)).